The chain runs to 264 residues: MFFFHKIVIPIIIGIIQGITEFFPVSSTGHMIIFIDWLDIKNKDTKILEIFVQLGSTISVFLFFYKKIIQILQLPMQKESNEKKNIHVLISILPTMFLGLIFYNKIKSLFNPTNVMYALILGGFFLIIAEKFKPKKPKTNSIKEINLVQSLIIGCFQTLCLYPGFSRSGASIAIATLLGFKRSVAVNFSFIISIPLIAGASVLDLIKNIQNVNMLNIPYLFSGFTISFIISFLLIKKFITILNKVSLTFFGIYRFLIAGIIYFI.

A run of 8 helical transmembrane segments spans residues 7 to 27 (IVIP…PVSS), 45 to 65 (TKIL…LFFY), 86 to 106 (IHVL…YNKI), 109 to 129 (LFNP…LIIA), 145 to 165 (INLV…YPGF), 186 to 206 (VNFS…LDLI), 215 to 235 (LNIP…FLLI), and 244 to 264 (KVSL…IYFI).

Belongs to the UppP family.

It localises to the cell membrane. The enzyme catalyses di-trans,octa-cis-undecaprenyl diphosphate + H2O = di-trans,octa-cis-undecaprenyl phosphate + phosphate + H(+). In terms of biological role, catalyzes the dephosphorylation of undecaprenyl diphosphate (UPP). Confers resistance to bacitracin. The protein is Undecaprenyl-diphosphatase of Buchnera aphidicola subsp. Schizaphis graminum (strain Sg).